Reading from the N-terminus, the 586-residue chain is CTP synthase 2 (586 aa).

In terms of domain architecture, Glutamine amidotransferase type-1 spans 300-554 (SIALVGKYTK…LAATGNLNAH (255 aa)). Residues Cys-399, His-526, and Glu-528 each act as for GATase activity in the active site. Ser-568, Ser-571, and Ser-574 each carry phosphoserine.

The protein belongs to the CTP synthase family.

The enzyme catalyses UTP + L-glutamine + ATP + H2O = CTP + L-glutamate + ADP + phosphate + 2 H(+). It participates in pyrimidine metabolism; CTP biosynthesis via de novo pathway; CTP from UDP: step 2/2. Catalyzes the ATP-dependent amination of UTP to CTP with either L-glutamine or ammonia as the source of nitrogen. Constitutes the rate-limiting enzyme in the synthesis of cytosine nucleotides. This chain is CTP synthase 2 (Ctps2), found in Mus musculus (Mouse).